A 518-amino-acid chain; its full sequence is GMP synthase [glutamine-hydrolyzing] (518 aa).

The 193-residue stretch at 11-203 (KIIVLDFGSQ…AFDVCQARSN (193 aa)) folds into the Glutamine amidotransferase type-1 domain. The Nucleophile role is filled by cysteine 88. Catalysis depends on residues histidine 177 and glutamate 179. The 190-residue stretch at 204–393 (WSMDDFIDMQ…LGMPHELVWR (190 aa)) folds into the GMPS ATP-PPase domain. 231 to 237 (SGGVDSS) contributes to the ATP binding site.

Homodimer.

It catalyses the reaction XMP + L-glutamine + ATP + H2O = GMP + L-glutamate + AMP + diphosphate + 2 H(+). It functions in the pathway purine metabolism; GMP biosynthesis; GMP from XMP (L-Gln route): step 1/1. Its function is as follows. Catalyzes the synthesis of GMP from XMP. The protein is GMP synthase [glutamine-hydrolyzing] of Ligilactobacillus salivarius (strain UCC118) (Lactobacillus salivarius).